A 247-amino-acid polypeptide reads, in one-letter code: MRQKLVIGNWKMHGSLAANAALLEGIQAGAGVARATLAVCAPFPYLAQCQALLNGSKVAWGAQDVSAEARGAFTGEVAASMLGEFGCTYVLVGHSERRTYHGETDQAVAAKALRALEFGIVPVVCVGETLAQREAGETEAVVGRQLQAVLEALTVEQLGRVVLAYEPVWAIGTGKTATSEQAQAVHAFLRGQVAARDAGVAGRMAILYGGSVKPDNAAELFSMTDIDGGLIGGASLKSEDFLAIGNA.

9 to 11 (NWK) contacts substrate. Histidine 94 (electrophile) is an active-site residue. The active-site Proton acceptor is the glutamate 166. Substrate-binding positions include glycine 172, serine 211, and 232 to 233 (GG).

It belongs to the triosephosphate isomerase family. As to quaternary structure, homodimer.

The protein resides in the cytoplasm. The catalysed reaction is D-glyceraldehyde 3-phosphate = dihydroxyacetone phosphate. It participates in carbohydrate biosynthesis; gluconeogenesis. It functions in the pathway carbohydrate degradation; glycolysis; D-glyceraldehyde 3-phosphate from glycerone phosphate: step 1/1. Its function is as follows. Involved in the gluconeogenesis. Catalyzes stereospecifically the conversion of dihydroxyacetone phosphate (DHAP) to D-glyceraldehyde-3-phosphate (G3P). This is Triosephosphate isomerase from Cupriavidus taiwanensis (strain DSM 17343 / BCRC 17206 / CCUG 44338 / CIP 107171 / LMG 19424 / R1) (Ralstonia taiwanensis (strain LMG 19424)).